The following is a 499-amino-acid chain: Hepatic triacylglycerol lipase (499 aa).

The first 22 residues, 1–22 (MDTSPLCFSILLVLCIFIQSSA), serve as a signal peptide directing secretion. Residues asparagine 42 and asparagine 78 are each glycosylated (N-linked (GlcNAc...) asparagine). Serine 168 acts as the Nucleophile in catalysis. Aspartate 194 (charge relay system) is an active-site residue. Residues 254-277 (CHFLELYRHIAQHGFNAITQTIKC) are essential for determining substrate specificity. Histidine 279 serves as the catalytic Charge relay system. The PLAT domain occupies 352 to 486 (YHYQFKIQFI…RPTQEKIFVK (135 aa)). 2 N-linked (GlcNAc...) asparagine glycosylation sites follow: asparagine 362 and asparagine 397.

This sequence belongs to the AB hydrolase superfamily. Lipase family. Homodimer.

The protein localises to the secreted. The catalysed reaction is a triacylglycerol + H2O = a diacylglycerol + a fatty acid + H(+). It catalyses the reaction a 1-acyl-sn-glycero-3-phosphocholine + H2O = sn-glycerol 3-phosphocholine + a fatty acid + H(+). It carries out the reaction a 1,2-diacyl-sn-glycero-3-phosphocholine + H2O = a 2-acyl-sn-glycero-3-phosphocholine + a fatty acid + H(+). The enzyme catalyses 1,2,3-tri-(9Z-octadecenoyl)-glycerol + H2O = di-(9Z)-octadecenoylglycerol + (9Z)-octadecenoate + H(+). The catalysed reaction is 1,2-di-(9Z-octadecenoyl)-sn-glycero-3-phosphocholine + H2O = (9Z-octadecenoyl)-sn-glycero-3-phosphocholine + (9Z)-octadecenoate + H(+). It catalyses the reaction 1,2,3-tributanoylglycerol + H2O = dibutanoylglycerol + butanoate + H(+). It carries out the reaction 1,2-dihexadecanoyl-sn-glycero-3-phosphocholine + H2O = hexadecanoyl-sn-glycero-3-phosphocholine + hexadecanoate + H(+). The enzyme catalyses 1,2-di-(9Z-octadecenoyl)-sn-glycerol + H2O = 2-(9Z-octadecenoyl)-glycerol + (9Z)-octadecenoate + H(+). The catalysed reaction is 1,2,3-tri-(9Z-octadecenoyl)-glycerol + H2O = 2,3-di-(9Z)-octadecenoyl-sn-glycerol + (9Z)-octadecenoate + H(+). It catalyses the reaction 1-(9Z-octadecenoyl)-sn-glycero-3-phospho-L-serine + H2O = sn-glycero-3-phospho-L-serine + (9Z)-octadecenoate + H(+). It carries out the reaction 1-hexadecanoyl-sn-glycero-3-phosphocholine + H2O = sn-glycerol 3-phosphocholine + hexadecanoate + H(+). The enzyme catalyses 1,3-di-(9Z-octadecenoyl)-glycerol + H2O = 3-(9Z-octadecenoyl)-sn-glycerol + (9Z)-octadecenoate + H(+). With respect to regulation, phospholipase A1 and triacylglycerol lipase are inhibited by sphingomyelin. Functionally, catalyzes the hydrolysis of triglycerides and phospholipids present in circulating plasma lipoproteins, including chylomicrons, intermediate density lipoproteins (IDL), low density lipoproteins (LDL) of large size and high density lipoproteins (HDL), releasing free fatty acids (FFA) and smaller lipoprotein particles. Also exhibits lysophospholipase activity. Can hydrolyze both neutral lipid and phospholipid substrates but shows a greater binding affinity for neutral lipid substrates than phospholipid substrates. In native LDL, preferentially hydrolyzes the phosphatidylcholine species containing polyunsaturated fatty acids at sn-2 position. The protein is Hepatic triacylglycerol lipase (LIPC) of Homo sapiens (Human).